The following is a 113-amino-acid chain: UPF0342 protein SMU_782 (113 aa).

It belongs to the UPF0342 family.

This Streptococcus mutans serotype c (strain ATCC 700610 / UA159) protein is UPF0342 protein SMU_782.